We begin with the raw amino-acid sequence, 60 residues long: Protein translocase subunit SecE (60 aa).

The chain crosses the membrane as a helical span at residues 37-57; the sequence is LLGFALVGGIGYLIHLGYIIL.

Belongs to the SecE/SEC61-gamma family. As to quaternary structure, component of the Sec protein translocase complex. Heterotrimer consisting of SecY (alpha), SecG (beta) and SecE (gamma) subunits. The heterotrimers can form oligomers, although 1 heterotrimer is thought to be able to translocate proteins. Interacts with the ribosome. May interact with SecDF, and other proteins may be involved.

Its subcellular location is the cell membrane. Its function is as follows. Essential subunit of the Sec protein translocation channel SecYEG. Clamps together the 2 halves of SecY. May contact the channel plug during translocation. This chain is Protein translocase subunit SecE, found in Aeropyrum pernix (strain ATCC 700893 / DSM 11879 / JCM 9820 / NBRC 100138 / K1).